The sequence spans 350 residues: Ion-translocating oxidoreductase complex subunit D (350 aa).

A run of 4 helical transmembrane segments spans residues isoleucine 20–glycine 40, glycine 42–leucine 62, isoleucine 89–alanine 109, and proline 123–leucine 143. Threonine 187 is modified (FMN phosphoryl threonine). The next 5 helical transmembrane spans lie at valine 214–leucine 234, tryptophan 242–phenylalanine 262, leucine 267–leucine 287, leucine 301–proline 321, and aspartate 322–threonine 342.

It belongs to the NqrB/RnfD family. The complex is composed of six subunits: RnfA, RnfB, RnfC, RnfD, RnfE and RnfG. The cofactor is FMN.

The protein resides in the cell inner membrane. Its function is as follows. Part of a membrane-bound complex that couples electron transfer with translocation of ions across the membrane. This chain is Ion-translocating oxidoreductase complex subunit D, found in Klebsiella pneumoniae (strain 342).